Reading from the N-terminus, the 102-residue chain is MADDVDQQQTTNTVEEPLDLIRLSLDERIYVKMRNDRELRGRLHAYDQHLNMILGDVEETVTTIEIDEETYEEIYKSTKRNIPMLFVRGDGVVLVAPPLRVG.

N-acetylalanine is present on alanine 2. One can recognise a Sm domain in the interval glutamate 16–valine 101.

It belongs to the snRNP Sm proteins family. As to quaternary structure, component of the precatalytic spliceosome (spliceosome B complex). Component of the U4/U6-U5 tri-snRNP complex, a building block of the precatalytic spliceosome (spliceosome B complex). The U4/U6-U5 tri-snRNP complex is composed of the U4, U6 and U5 snRNAs and at least PRPF3, PRPF4, PRPF6, PRPF8, PRPF31, SNRNP200, TXNL4A, SNRNP40, SNRPB, SNRPD1, SNRPD2, SNRPD3, SNRPE, SNRPF, SNRPG, DDX23, CD2BP2, PPIH, SNU13, EFTUD2, SART1 and USP39, plus LSM2, LSM3, LSM4, LSM5, LSM6, LSM7 and LSM8. LSM2, LSM3, LSM4, LSM5, LSM6, LSM7 and LSM8 form a heptameric, ring-shaped subcomplex (the LSM2-8 complex) that is part of the U4/U6-U5 tri-snRNP complex and the precatalytic spliceosome.

The protein resides in the nucleus. Functionally, plays a role in pre-mRNA splicing as component of the U4/U6-U5 tri-snRNP complex that is involved in spliceosome assembly, and as component of the precatalytic spliceosome (spliceosome B complex). The heptameric LSM2-8 complex binds specifically to the 3'-terminal U-tract of U6 snRNA. The polypeptide is U6 snRNA-associated Sm-like protein LSm3 (LSM3) (Bos taurus (Bovine)).